Here is a 99-residue protein sequence, read N- to C-terminus: Aspartyl/glutamyl-tRNA(Asn/Gln) amidotransferase subunit C (99 aa).

It belongs to the GatC family. Heterotrimer of A, B and C subunits.

The enzyme catalyses L-glutamyl-tRNA(Gln) + L-glutamine + ATP + H2O = L-glutaminyl-tRNA(Gln) + L-glutamate + ADP + phosphate + H(+). The catalysed reaction is L-aspartyl-tRNA(Asn) + L-glutamine + ATP + H2O = L-asparaginyl-tRNA(Asn) + L-glutamate + ADP + phosphate + 2 H(+). Functionally, allows the formation of correctly charged Asn-tRNA(Asn) or Gln-tRNA(Gln) through the transamidation of misacylated Asp-tRNA(Asn) or Glu-tRNA(Gln) in organisms which lack either or both of asparaginyl-tRNA or glutaminyl-tRNA synthetases. The reaction takes place in the presence of glutamine and ATP through an activated phospho-Asp-tRNA(Asn) or phospho-Glu-tRNA(Gln). This chain is Aspartyl/glutamyl-tRNA(Asn/Gln) amidotransferase subunit C, found in Burkholderia ambifaria (strain MC40-6).